The primary structure comprises 284 residues: RNA polymerase sigma factor RpoH (284 aa).

The tract at residues 54–123 is sigma-70 factor domain-2; the sequence is MVLAHLRFVV…IHEFILRNWR (70 aa). The short motif at 78 to 81 is the Interaction with polymerase core subunit RpoC element; that stretch reads DLIQ. Residues 229 to 280 are sigma-70 factor domain-4; the sequence is ALEGLDERSRDILQQRWLSEEKATLHDLAEKYNVSAERIRQLEKNAMSKLKG. The segment at residues 253–272 is a DNA-binding region (H-T-H motif); that stretch reads LHDLAEKYNVSAERIRQLEK.

It belongs to the sigma-70 factor family. RpoH subfamily. Interacts with the RNA polymerase core enzyme.

The protein resides in the cytoplasm. Functionally, sigma factors are initiation factors that promote the attachment of RNA polymerase to specific initiation sites and are then released. This sigma factor is involved in regulation of expression of heat shock genes. This Pseudomonas aeruginosa (strain ATCC 15692 / DSM 22644 / CIP 104116 / JCM 14847 / LMG 12228 / 1C / PRS 101 / PAO1) protein is RNA polymerase sigma factor RpoH.